Consider the following 138-residue polypeptide: Transcription antitermination protein NusB (138 aa).

It belongs to the NusB family.

In terms of biological role, involved in transcription antitermination. Required for transcription of ribosomal RNA (rRNA) genes. Binds specifically to the boxA antiterminator sequence of the ribosomal RNA (rrn) operons. The chain is Transcription antitermination protein NusB from Helicobacter pylori (strain P12).